Here is a 313-residue protein sequence, read N- to C-terminus: Protein OPG185 (313 aa).

A signal peptide spans 1–16 (MTRLSILLLLISLVYS). Residues 17–277 (TPYPQTQISK…GKYSTKDYVK (261 aa)) lie on the Virion surface side of the membrane. Residues 18-121 (PYPQTQISKK…TTNDTDKVDY (104 aa)) form the Ig-like V-type domain. C36 and C105 are joined by a disulfide. N-linked (GlcNAc...) asparagine; by host glycosylation is found at N71, N114, N163, N182, and N262. Residues 278-301 (VFGIAALIILSAVAIFCITYYICN) form a helical membrane-spanning segment. Residues 302 to 313 (KRSRKYKTENKV) are Intravirion-facing.

It belongs to the orthopoxvirus OPG185 family. Heterodimerizes with OPG040. The heterodimer OPG185-OPG040 interacts with components of the entry fusion complex OPG143 and OPG094. Heterodimer with C3/VPC protein; disulfide-linked. Glycosylated; contains phosphate and sulfate-substituted glycans. O-glycosylation is required for hemagglutination and hemadsorption activities of infected cell membranes.

The protein resides in the virion membrane. The protein localises to the host membrane. Functionally, prevents cell to cell fusion by interacting with and directing the viral OPG040 protein on the host plasma membrane. The OPG185-OPG040 complex associates with components of the entry fusion complex (EFC) presumably to avoid superinfection and syncytium formation. Via its interaction with C3/VCP protein, protects the infected cell and probably also the extracellular enveloped virus from complement attack. In Homo sapiens (Human), this protein is Protein OPG185 (OPG185).